A 1141-amino-acid chain; its full sequence is Eukaryotic translation initiation factor 3 subunit A (1141 aa).

The PCI domain occupies 319-501; it reads LQRMAAHVLL…NSIYFGTDLT (183 aa). Basic and acidic residues-rich tracts occupy residues 588 to 623 and 829 to 899; these read QNNAREEEEARRQEEESRKAKLAEQKRLEQEQEERE and AAEE…RGGD. Disordered regions lie at residues 588–631 and 829–1141; these read QNNA…QNEI and AAEE…VKRR. A Phosphoserine modification is found at S908. 4 stretches are compositionally biased toward basic and acidic residues: residues 920 to 976, 990 to 1051, 1059 to 1087, and 1110 to 1131; these read ERND…EPDT, SRDD…EPQR, DAPRHADRENRRPAGERRDRDVRETRGDQ, and TREEKPAAKRDQAQEKENKAGD.

Belongs to the eIF-3 subunit A family. In terms of assembly, component of the eukaryotic translation initiation factor 3 (eIF-3) complex. The eIF-3 complex interacts with pix.

It localises to the cytoplasm. In terms of biological role, RNA-binding component of the eukaryotic translation initiation factor 3 (eIF-3) complex, which is involved in protein synthesis of a specialized repertoire of mRNAs and, together with other initiation factors, stimulates binding of mRNA and methionyl-tRNAi to the 40S ribosome. The eIF-3 complex specifically targets and initiates translation of a subset of mRNAs involved in cell proliferation. This chain is Eukaryotic translation initiation factor 3 subunit A, found in Drosophila sechellia (Fruit fly).